Consider the following 270-residue polypeptide: MIEQNEKASIGIIGGSGLYDPGIFSESKEIKVYTPYGQPSDFITIGKIGNKSVAFLPRHGRGHRIPPHKINYRANIWALKELGVRWVISVSAVGSLRMDYKLGDFVIPDQFIDMTKNREYSFFDGPVVAHVSMADPFCNSLRKLAIETAKELNIKTHESGTYICIEGPRFSTRAESRTWREVYKADIIGMTLVPEVNLACEAQMCYATIAMVTDYDVFAEIPVTAEEVTRVMAENTEKAKKLLYALIQKLPEKPEEGSCSCCNSLKTALV.

Phosphate is bound by residues Ser-16, 58 to 59 (RH), and 91 to 92 (SA). 3 disulfides stabilise this stretch: Cys-138–Cys-205, Cys-200–Cys-262, and Cys-259–Cys-261. Residue Met-190 coordinates substrate. Thr-191 provides a ligand contact to phosphate. 214–216 (DYD) serves as a coordination point for substrate.

It belongs to the PNP/MTAP phosphorylase family. MTAP subfamily. As to quaternary structure, homohexamer. Dimer of a homotrimer.

The catalysed reaction is S-methyl-5'-thioadenosine + phosphate = 5-(methylsulfanyl)-alpha-D-ribose 1-phosphate + adenine. It functions in the pathway amino-acid biosynthesis; L-methionine biosynthesis via salvage pathway; S-methyl-5-thio-alpha-D-ribose 1-phosphate from S-methyl-5'-thioadenosine (phosphorylase route): step 1/1. In terms of biological role, catalyzes the reversible phosphorylation of S-methyl-5'-thioadenosine (MTA) to adenine and 5-methylthioribose-1-phosphate. Involved in the breakdown of MTA, a major by-product of polyamine biosynthesis. Responsible for the first step in the methionine salvage pathway after MTA has been generated from S-adenosylmethionine. Has broad substrate specificity with 6-aminopurine nucleosides as preferred substrates. The sequence is that of S-methyl-5'-thioadenosine phosphorylase from Saccharolobus solfataricus (strain ATCC 35092 / DSM 1617 / JCM 11322 / P2) (Sulfolobus solfataricus).